Consider the following 293-residue polypeptide: Glycine N-methyltransferase (293 aa).

An N-acetylvaline modification is found at valine 2. (6S)-5-methyl-5,6,7,8-tetrahydrofolate is bound by residues serine 4 and tyrosine 6. Serine 10 carries the post-translational modification Phosphoserine. 4 residues coordinate S-adenosyl-L-methionine: tyrosine 22, tryptophan 31, tyrosine 34, and arginine 41. Position 34 is a phosphotyrosine (tyrosine 34). Position 46 is an N6-succinyllysine (lysine 46). Residues alanine 65, 86–88 (DAS), 117–118 (NW), leucine 137, 137–140 (LGNS), and arginine 176 contribute to the S-adenosyl-L-methionine site. N6-succinyllysine is present on residues lysine 191, lysine 196, and lysine 201. Histidine 215 provides a ligand contact to (6S)-5-methyl-5,6,7,8-tetrahydrofolate. Tyrosine 221 provides a ligand contact to S-adenosyl-L-methionine. (6S)-5-methyl-5,6,7,8-tetrahydrofolate is bound at residue arginine 240.

It belongs to the class I-like SAM-binding methyltransferase superfamily. Glycine N-methyltransferase family. In terms of assembly, homotetramer.

It is found in the cytoplasm. It catalyses the reaction glycine + S-adenosyl-L-methionine = sarcosine + S-adenosyl-L-homocysteine + H(+). With respect to regulation, inhibited by 5-methyltetrahydrofolate monoglutamate and by 5-methyltetrahydrofolate pentaglutamate, inhibition is much more effective by the pentaglutamate form than by the monoglutamate form. Two molecules of 5-methyltetrahydrofolate are bound per tetramer. The binding sites are localized between subunits. Inhibitor binding may preclude movements of the polypeptide chain that are necessary for enzyme activity. Its function is as follows. Catalyzes the methylation of glycine by using S-adenosylmethionine (AdoMet) to form N-methylglycine (sarcosine) with the concomitant production of S-adenosylhomocysteine (AdoHcy), a reaction regulated by the binding of 5-methyltetrahydrofolate. Plays an important role in the regulation of methyl group metabolism by regulating the ratio between S-adenosyl-L-methionine and S-adenosyl-L-homocysteine. The polypeptide is Glycine N-methyltransferase (Gnmt) (Mus musculus (Mouse)).